A 260-amino-acid chain; its full sequence is Indole-3-glycerol phosphate synthase (260 aa).

This sequence belongs to the TrpC family.

The enzyme catalyses 1-(2-carboxyphenylamino)-1-deoxy-D-ribulose 5-phosphate + H(+) = (1S,2R)-1-C-(indol-3-yl)glycerol 3-phosphate + CO2 + H2O. The protein operates within amino-acid biosynthesis; L-tryptophan biosynthesis; L-tryptophan from chorismate: step 4/5. The protein is Indole-3-glycerol phosphate synthase of Lacticaseibacillus paracasei (strain ATCC 334 / BCRC 17002 / CCUG 31169 / CIP 107868 / KCTC 3260 / NRRL B-441) (Lactobacillus paracasei).